The sequence spans 91 residues: Tachykinin-like peptide (91 aa).

A signal peptide spans Met1 to Ala19. Residues Ala20–Arg51 constitute a propeptide that is removed on maturation. Met62 carries the methionine amide modification. Residues Lys64 to Lys91 form a disordered region. Positions Asn66–Lys91 are excised as a propeptide. The segment covering Arg76 to Lys91 has biased composition (basic and acidic residues).

As to expression, expressed by the skin glands.

Its subcellular location is the secreted. Its function is as follows. Tachykinins are active peptides which excite neurons, evoke behavioral responses, are potent vasodilators and secretagogues, and contract (directly or indirectly) many smooth muscles. In vitro, induces contraction of guinea pig ileum smooth muscle in a dose-dependent manner. This Theloderma corticale (Kwangsi warty tree frog) protein is Tachykinin-like peptide.